The primary structure comprises 192 residues: GTP cyclohydrolase 1 (192 aa).

Zn(2+) is bound by residues Cys-76, His-79, and Cys-148.

Belongs to the GTP cyclohydrolase I family. As to quaternary structure, toroid-shaped homodecamer, composed of two pentamers of five dimers.

The enzyme catalyses GTP + H2O = 7,8-dihydroneopterin 3'-triphosphate + formate + H(+). It functions in the pathway cofactor biosynthesis; 7,8-dihydroneopterin triphosphate biosynthesis; 7,8-dihydroneopterin triphosphate from GTP: step 1/1. The protein is GTP cyclohydrolase 1 of Carboxydothermus hydrogenoformans (strain ATCC BAA-161 / DSM 6008 / Z-2901).